Consider the following 670-residue polypeptide: Leucine-rich repeat-containing protein 45 (670 aa).

LRR repeat units lie at residues Thr-87–Lys-108, Ser-115–Phe-136, Phe-145–Met-166, Ser-173–Asn-194, and Thr-201–Ala-223. The stretch at Leu-234–Gln-645 forms a coiled coil.

As to quaternary structure, homomer.

Its subcellular location is the cytoplasm. The protein resides in the cytoskeleton. It is found in the microtubule organizing center. It localises to the centrosome. In terms of biological role, component of the proteinaceous fiber-like linker between two centrioles, required for centrosome cohesion. The protein is Leucine-rich repeat-containing protein 45 (LRRC45) of Gallus gallus (Chicken).